We begin with the raw amino-acid sequence, 504 residues long: Anaerobic nitric oxide reductase transcription regulator NorR (504 aa).

Residue Asp-57 is modified to 4-aspartylphosphate. One can recognise a Sigma-54 factor interaction domain in the interval 187 to 416 (MIGLSPGMTQ…LEHAIHRAVV (230 aa)). ATP contacts are provided by residues 215–222 (GETGTGKE) and 278–287 (ADNGTLFLDE). Positions 479–498 (WAACARMLETDVANLHRLAK) form a DNA-binding region, H-T-H motif.

It participates in nitrogen metabolism; nitric oxide reduction. Functionally, required for the expression of anaerobic nitric oxide (NO) reductase, acts as a transcriptional activator for at least the norVW operon. Activation also requires sigma-54. This chain is Anaerobic nitric oxide reductase transcription regulator NorR, found in Escherichia coli O45:K1 (strain S88 / ExPEC).